The sequence spans 146 residues: Small ribosomal subunit protein eS17 (146 aa).

This sequence belongs to the eukaryotic ribosomal protein eS17 family. As to quaternary structure, component of the small ribosomal subunit (SSU). Mature N.crassa ribosomes consist of a small (40S) and a large (60S) subunit. The 40S small subunit contains 1 molecule of ribosomal RNA (18S rRNA) and at least 32 different proteins. The large 60S subunit contains 3 rRNA molecules (26S, 5.8S and 5S rRNA) and at least 42 different proteins.

The protein localises to the cytoplasm. Component of the ribosome, a large ribonucleoprotein complex responsible for the synthesis of proteins in the cell. The small ribosomal subunit (SSU) binds messenger RNAs (mRNAs) and translates the encoded message by selecting cognate aminoacyl-transfer RNA (tRNA) molecules. The large subunit (LSU) contains the ribosomal catalytic site termed the peptidyl transferase center (PTC), which catalyzes the formation of peptide bonds, thereby polymerizing the amino acids delivered by tRNAs into a polypeptide chain. The nascent polypeptides leave the ribosome through a tunnel in the LSU and interact with protein factors that function in enzymatic processing, targeting, and the membrane insertion of nascent chains at the exit of the ribosomal tunnel. The polypeptide is Small ribosomal subunit protein eS17 (rps-17) (Neurospora crassa (strain ATCC 24698 / 74-OR23-1A / CBS 708.71 / DSM 1257 / FGSC 987)).